A 493-amino-acid polypeptide reads, in one-letter code: NAD(P)H dehydrogenase (quinone) (493 aa).

Residues 12–13 (PA), 35–37 (DCD), 42–43 (AA), K52, G117, D317, 324–325 (LA), and Y450 each bind FAD.

The protein belongs to the class-I pyridine nucleotide-disulfide oxidoreductase family. Homotetramer. It depends on FAD as a cofactor.

It carries out the reaction a quinone + NADH + H(+) = a quinol + NAD(+). It catalyses the reaction a quinone + NADPH + H(+) = a quinol + NADP(+). In terms of biological role, may contribute to virulence by increasing resistance to reactive oxygen intermediates. It can reduce 2,6-dimethyl-1,4-benzoquinone (DMBQ), 5-hydroxy-1,4-naphthaquinone (5-HNQ) and menadione. In Mycobacterium tuberculosis (strain CDC 1551 / Oshkosh), this protein is NAD(P)H dehydrogenase (quinone) (lpdA).